The following is a 275-amino-acid chain: 2,3,4,5-tetrahydropyridine-2,6-dicarboxylate N-succinyltransferase (275 aa).

Residues arginine 106 and aspartate 143 each coordinate substrate.

The protein belongs to the transferase hexapeptide repeat family. As to quaternary structure, homotrimer.

Its subcellular location is the cytoplasm. The enzyme catalyses (S)-2,3,4,5-tetrahydrodipicolinate + succinyl-CoA + H2O = (S)-2-succinylamino-6-oxoheptanedioate + CoA. The protein operates within amino-acid biosynthesis; L-lysine biosynthesis via DAP pathway; LL-2,6-diaminopimelate from (S)-tetrahydrodipicolinate (succinylase route): step 1/3. The polypeptide is 2,3,4,5-tetrahydropyridine-2,6-dicarboxylate N-succinyltransferase (Burkholderia mallei (strain NCTC 10247)).